We begin with the raw amino-acid sequence, 320 residues long: Lipoyl synthase (320 aa).

The tract at residues 9–31 (ANDARPRHPEKAHRPDQPIQRKP) is disordered. Residues 12–31 (ARPRHPEKAHRPDQPIQRKP) show a composition bias toward basic and acidic residues. [4Fe-4S] cluster is bound by residues C60, C65, C71, C86, C90, C93, and S299. One can recognise a Radical SAM core domain in the interval 72–288 (WEKKHATFMI…ETTAYAKGFL (217 aa)).

This sequence belongs to the radical SAM superfamily. Lipoyl synthase family. The cofactor is [4Fe-4S] cluster.

The protein resides in the cytoplasm. It carries out the reaction [[Fe-S] cluster scaffold protein carrying a second [4Fe-4S](2+) cluster] + N(6)-octanoyl-L-lysyl-[protein] + 2 oxidized [2Fe-2S]-[ferredoxin] + 2 S-adenosyl-L-methionine + 4 H(+) = [[Fe-S] cluster scaffold protein] + N(6)-[(R)-dihydrolipoyl]-L-lysyl-[protein] + 4 Fe(3+) + 2 hydrogen sulfide + 2 5'-deoxyadenosine + 2 L-methionine + 2 reduced [2Fe-2S]-[ferredoxin]. Its pathway is protein modification; protein lipoylation via endogenous pathway; protein N(6)-(lipoyl)lysine from octanoyl-[acyl-carrier-protein]: step 2/2. Its function is as follows. Catalyzes the radical-mediated insertion of two sulfur atoms into the C-6 and C-8 positions of the octanoyl moiety bound to the lipoyl domains of lipoate-dependent enzymes, thereby converting the octanoylated domains into lipoylated derivatives. The protein is Lipoyl synthase of Methylobacterium nodulans (strain LMG 21967 / CNCM I-2342 / ORS 2060).